Consider the following 720-residue polypeptide: DNA ligase (720 aa).

Residues 60–64 (DYDYD), 109–110 (SL), and Glu-140 each bind NAD(+). Catalysis depends on Lys-142, which acts as the N6-AMP-lysine intermediate. NAD(+) is bound by residues Arg-163 and Glu-201. The segment at 220-239 (GLPPFANPRNAAAGSIRQKD) is disordered. Positions 320 and 344 each coordinate NAD(+). Zn(2+) contacts are provided by Cys-438, Cys-441, Cys-456, and Cys-461. In terms of domain architecture, BRCT spans 619–709 (KVADVLKGKT…VDLEKIKKED (91 aa)).

It belongs to the NAD-dependent DNA ligase family. LigA subfamily. Mn(2+) serves as cofactor. It depends on Mg(2+) as a cofactor.

The enzyme catalyses NAD(+) + (deoxyribonucleotide)n-3'-hydroxyl + 5'-phospho-(deoxyribonucleotide)m = (deoxyribonucleotide)n+m + AMP + beta-nicotinamide D-nucleotide.. DNA ligase that catalyzes the formation of phosphodiester linkages between 5'-phosphoryl and 3'-hydroxyl groups in double-stranded DNA using NAD as a coenzyme and as the energy source for the reaction. It is essential for DNA replication and repair of damaged DNA. The protein is DNA ligase of Aquifex aeolicus (strain VF5).